Consider the following 103-residue polypeptide: Large ribosomal subunit protein bL21 (103 aa).

This sequence belongs to the bacterial ribosomal protein bL21 family. In terms of assembly, part of the 50S ribosomal subunit. Contacts protein L20.

In terms of biological role, this protein binds to 23S rRNA in the presence of protein L20. This is Large ribosomal subunit protein bL21 from Brevibacillus brevis (strain 47 / JCM 6285 / NBRC 100599).